Consider the following 334-residue polypeptide: N-acetylmuramate/N-acetylglucosamine kinase (334 aa).

This sequence belongs to the kinase AmgK family.

It catalyses the reaction N-acetyl-D-muramate + ATP = N-acetyl-alpha-D-muramate 1-phosphate + ADP + H(+). The catalysed reaction is N-acetyl-D-glucosamine + ATP = N-acetyl-alpha-D-glucosamine 1-phosphate + ADP + H(+). Its pathway is cell wall biogenesis; peptidoglycan recycling. Its function is as follows. Sugar kinase that catalyzes the ATP-dependent phosphorylation of N-acetylmuramate (MurNAc) and N-acetylglucosamine (GlcNAc) at its C1 hydroxyl group, leading to MurNAc alpha-1P and GlcNAc alpha-1P, respectively. Is likely involved in peptidoglycan recycling as part of a cell wall recycling pathway that bypasses de novo biosynthesis of the peptidoglycan precursor UDP-MurNAc. Is able to complement the fosfomycin sensitivity phenotype of a P.putida mutant lacking amgK. This chain is N-acetylmuramate/N-acetylglucosamine kinase, found in Neisseria meningitidis serogroup B (strain ATCC BAA-335 / MC58).